Here is a 358-residue protein sequence, read N- to C-terminus: Carbamoyl phosphate synthase small chain (358 aa).

A CPSase region spans residues 1–168 (MKRLLLLEDG…TKLAYASPGV (168 aa)). 3 residues coordinate L-glutamine: serine 45, glycine 219, and glycine 221. The Glutamine amidotransferase type-1 domain maps to 171 to 357 (NIVLVDFGLK…INMIDDFQQK (187 aa)). The Nucleophile role is filled by cysteine 246. Methionine 247, glutamine 250, asparagine 288, glycine 290, and tyrosine 291 together coordinate L-glutamine. Active-site residues include histidine 330 and aspartate 332.

This sequence belongs to the CarA family. In terms of assembly, composed of two chains; the small (or glutamine) chain promotes the hydrolysis of glutamine to ammonia, which is used by the large (or ammonia) chain to synthesize carbamoyl phosphate. Tetramer of heterodimers (alpha,beta)4.

It carries out the reaction hydrogencarbonate + L-glutamine + 2 ATP + H2O = carbamoyl phosphate + L-glutamate + 2 ADP + phosphate + 2 H(+). It catalyses the reaction L-glutamine + H2O = L-glutamate + NH4(+). It participates in amino-acid biosynthesis; L-arginine biosynthesis; carbamoyl phosphate from bicarbonate: step 1/1. The protein operates within pyrimidine metabolism; UMP biosynthesis via de novo pathway; (S)-dihydroorotate from bicarbonate: step 1/3. Functionally, small subunit of the glutamine-dependent carbamoyl phosphate synthetase (CPSase). CPSase catalyzes the formation of carbamoyl phosphate from the ammonia moiety of glutamine, carbonate, and phosphate donated by ATP, constituting the first step of 2 biosynthetic pathways, one leading to arginine and/or urea and the other to pyrimidine nucleotides. The small subunit (glutamine amidotransferase) binds and cleaves glutamine to supply the large subunit with the substrate ammonia. This Streptococcus agalactiae serotype III (strain NEM316) protein is Carbamoyl phosphate synthase small chain.